The chain runs to 296 residues: 4-diphosphocytidyl-2-C-methyl-D-erythritol kinase (296 aa).

The active site involves Lys-18. 103–113 (PHGAGLGGGSS) is an ATP binding site. The active site involves Asp-146.

It belongs to the GHMP kinase family. IspE subfamily.

It carries out the reaction 4-CDP-2-C-methyl-D-erythritol + ATP = 4-CDP-2-C-methyl-D-erythritol 2-phosphate + ADP + H(+). It participates in isoprenoid biosynthesis; isopentenyl diphosphate biosynthesis via DXP pathway; isopentenyl diphosphate from 1-deoxy-D-xylulose 5-phosphate: step 3/6. Its function is as follows. Catalyzes the phosphorylation of the position 2 hydroxy group of 4-diphosphocytidyl-2C-methyl-D-erythritol. This Solidesulfovibrio magneticus (strain ATCC 700980 / DSM 13731 / RS-1) (Desulfovibrio magneticus) protein is 4-diphosphocytidyl-2-C-methyl-D-erythritol kinase.